A 54-amino-acid polypeptide reads, in one-letter code: Relaxin (54 aa).

Gln1 is modified (pyrrolidone carboxylic acid). Cystine bridges form between Cys10–Cys41, Cys22–Cys54, and Cys40–Cys45.

It belongs to the insulin family. As to quaternary structure, heterodimer of a B chain and an A chain linked by two disulfide bonds.

It is found in the secreted. Its function is as follows. Relaxin is an ovarian hormone that acts with estrogen to produce dilatation of the birth canal in many mammals. This is Relaxin from Balaenoptera edeni (Pigmy Bryde's whale).